Here is a 1305-residue protein sequence, read N- to C-terminus: MDSVPRLTGVFTLLLSGLWHLGSSATNYNCDDPLASLLSPMAFSSSSDLTGTHSPAQLNRRVGTGGWSPADSNAQQWLQMDLGNRVEITAVATQGRYGSSDWVTSYSLMFSDTGRNWKQYKQEDSIWTFAGNMNADSVMHHKLLHSVRARFVRFVPLEWNPSGKIGMRVEVYGCSYKSDVADFDGRSSLLYRFNQKLMSTLKDVISLKFKSMQGDGVLFHGEGQRGDHITLELQKGRLALHLNLDDSKPRLSSSPPSVTLGSLLDDQQWHSVLIERVGKQVNFSVDKHTQHFRTKGEADALDIDYELSFGGIPVPGKPGTFLKKNFHGCIENLYYNGVNIIDLAKRRKHQIYTGNVTFSCSEPQIVPITFVNSSSSYLLLPGTPQIDGLSVSFQFRTWNKDGLLLSTELSEGSGTLLLSLEGGTVRLVIQKMTERTAEILTGSSLNDGLWHSVSINARRDRITLSLDNDAASPAQDTTRVQIYSGNSYYFGGCPDNLTDSQCLNPIKAFQGCMRLIFIDNQPKDLISVQQGSLGNFSDLHIDLCSIKDRCLPNYCEHGGFCSQSWTTFYCNCSNTGYTGATCHNSLYEQSCEVYRHQGNTAGFFYIDSDGSGPLGPLQVYCNITEDKIWTSVQHNNTELTHVRGANPEKPYTMALDYGGSMEQLEAMIDSSEHCEQEVAYHCRRSRLLNTPDGTPFTWWIGRSNEKHPYWGGAPPGVQQCECGLDESCLDVRHFCNCDADKDEWTNDTGFLSFKDHLPVTQIVITDTNRSNSEAAWRIGPLRCYGDRHFWNAVSFYTEASYLHFPTFHAEFSADISFFFKTTALSGVFLENLGIKDFIRLEISSPSEITFAIDVGNGPVELIVHSPSLLNDNQWHYIRAERNLKETSLQVDSLPRMTRETSEEGHFRLQLNSQLFVGGTSSRQKGFLGCIRSLHLNGQKLDLEERAKVTSGVRPGCPGHCSTYGSICHNGGKCVEKYSGYFCDCTNSPYEGPFCKKEVSAVFEAGTSVTYMFQEPYPVTKNISLSSSAIYADAAPSKENIAFSFVTAQAPSLLLYINSSQDYLAVLLCKNGSLQVRYQLSKEETQVFNIDAENFANRRMHHLKINREGRELAIQVDHQLRLSYNFSSEVEFRAIRSLTLGKVREHLGLDSEIAKANTLGFVGCLSSVQYNQVAPLKAALRHATIAPVTVQGTLMESSCGSMVDVDVNTVTTVHSSSDPFGKTDEREPLTNAVRSDSAVIGGVIAVVIFIIFSIIGIMTRFLYQHKQSHRTNQMKEKEYPENLDSSFRNDIDLQNTVSECKREYFI.

Positions 1–24 (MDSVPRLTGVFTLLLSGLWHLGSS) are cleaved as a signal peptide. Residues 25 to 1236 (ATNYNCDDPL…PLTNAVRSDS (1212 aa)) lie on the Extracellular side of the membrane. Residues 30–174 (CDDPLASLLS…IGMRVEVYGC (145 aa)) form the F5/8 type C domain. Cys-30 and Cys-174 are joined by a disulfide. 2 Laminin G-like domains span residues 180–360 (VADF…TFSC) and 367–544 (PITF…IDLC). N-linked (GlcNAc...) asparagine glycosylation is found at Asn-282, Asn-355, and Asn-496. Cysteines 329 and 360 form a disulfide. 4 cysteine pairs are disulfide-bonded: Cys-512/Cys-544, Cys-550/Cys-561, Cys-555/Cys-570, and Cys-572/Cys-582. The region spanning 546–583 (IKDRCLPNYCEHGGFCSQSWTTFYCNCSNTGYTGATCH) is the EGF-like 1 domain. The region spanning 584–790 (NSLYEQSCEV…LRCYGDRHFW (207 aa)) is the Fibrinogen C-terminal domain. An N-linked (GlcNAc...) asparagine glycan is attached at Asn-622. One can recognise a Laminin G-like 3 domain in the interval 791-956 (NAVSFYTEAS…KVTSGVRPGC (166 aa)). Intrachain disulfides connect Cys-929/Cys-956, Cys-960/Cys-973, Cys-967/Cys-982, Cys-984/Cys-994, and Cys-1163/Cys-1198. Residues 957-995 (PGHCSTYGSICHNGGKCVEKYSGYFCDCTNSPYEGPFCK) enclose the EGF-like 2 domain. The Laminin G-like 4 domain maps to 1000 to 1198 (AVFEAGTSVT…VQGTLMESSC (199 aa)). The helical transmembrane segment at 1237 to 1257 (AVIGGVIAVVIFIIFSIIGIM) threads the bilayer. Over 1258–1305 (TRFLYQHKQSHRTNQMKEKEYPENLDSSFRNDIDLQNTVSECKREYFI) the chain is Cytoplasmic.

Belongs to the neurexin family.

The protein resides in the membrane. May play a role in the correct development and proper functioning of the peripheral and central nervous system and be involved in cell adhesion and intercellular communication. This chain is Contactin-associated protein-like 5 (CNTNAP5), found in Canis lupus familiaris (Dog).